A 145-amino-acid polypeptide reads, in one-letter code: Transcription antitermination protein NusB (145 aa).

It belongs to the NusB family.

Involved in transcription antitermination. Required for transcription of ribosomal RNA (rRNA) genes. Binds specifically to the boxA antiterminator sequence of the ribosomal RNA (rrn) operons. In Burkholderia lata (strain ATCC 17760 / DSM 23089 / LMG 22485 / NCIMB 9086 / R18194 / 383), this protein is Transcription antitermination protein NusB.